Consider the following 361-residue polypeptide: Nicotinate-nucleotide--dimethylbenzimidazole phosphoribosyltransferase (361 aa).

The Proton acceptor role is filled by glutamate 315.

The protein belongs to the CobT family.

It catalyses the reaction 5,6-dimethylbenzimidazole + nicotinate beta-D-ribonucleotide = alpha-ribazole 5'-phosphate + nicotinate + H(+). The protein operates within nucleoside biosynthesis; alpha-ribazole biosynthesis; alpha-ribazole from 5,6-dimethylbenzimidazole: step 1/2. Catalyzes the synthesis of alpha-ribazole-5'-phosphate from nicotinate mononucleotide (NAMN) and 5,6-dimethylbenzimidazole (DMB). This is Nicotinate-nucleotide--dimethylbenzimidazole phosphoribosyltransferase from Clostridium perfringens (strain ATCC 13124 / DSM 756 / JCM 1290 / NCIMB 6125 / NCTC 8237 / Type A).